Here is a 204-residue protein sequence, read N- to C-terminus: Photosystem I reaction center subunit II-2, chloroplastic (204 aa).

The transit peptide at 1 to 44 (MATQAAGIFSPAITTTTSAVKKLHLFSSSHRPKSLSFTKTAIRA) directs the protein to the chloroplast. A Phosphothreonine modification is found at threonine 47. The segment at 47–71 (TESSSAAPAVKEAPVGFTPPQLDPN) is disordered. The segment at 137-145 (RLRSKYKIT) is ferredoxin and ferredoxin-oxidoreductase binding.

Belongs to the PsaD family. As to quaternary structure, interacts with CURT1C.

The protein localises to the plastid. It localises to the chloroplast thylakoid membrane. In terms of biological role, PSAD can form complexes with ferredoxin and ferredoxin-oxidoreductase in photosystem I (PS I) reaction center. PSAD may encode the ferredoxin-docking protein. This chain is Photosystem I reaction center subunit II-2, chloroplastic (PSAD2), found in Arabidopsis thaliana (Mouse-ear cress).